The chain runs to 222 residues: DnaJ homolog subfamily B member 9 (222 aa).

A signal peptide spans 1 to 23 (MATPQSVFVFAICILMITELILA). Positions 26-90 (NYYDILGVPK…NRRKEYDIIG (65 aa)) constitute a J domain. The divergent targeting domain stretch occupies residues 91 to 222 (HSAFTNGKGQ…VTTYTDCSGQ (132 aa)). Residue serine 133 is modified to Phosphoserine.

In terms of assembly, interacts with HSPA5/BiP; interaction is direct. Interacts with ERN1/IRE1 (via the luminal region). Interacts with DERL1.

Its subcellular location is the endoplasmic reticulum lumen. Its function is as follows. Co-chaperone for Hsp70 protein HSPA5/BiP that acts as a key repressor of the ERN1/IRE1-mediated unfolded protein response (UPR). J domain-containing co-chaperones stimulate the ATPase activity of Hsp70 proteins and are required for efficient substrate recognition by Hsp70 proteins. In the unstressed endoplasmic reticulum, interacts with the luminal region of ERN1/IRE1 and selectively recruits HSPA5/BiP: HSPA5/BiP disrupts the dimerization of the active ERN1/IRE1 luminal region, thereby inactivating ERN1/IRE1. Also involved in endoplasmic reticulum-associated degradation (ERAD) of misfolded proteins. Required for survival of B-cell progenitors and normal antibody production. This chain is DnaJ homolog subfamily B member 9, found in Rattus norvegicus (Rat).